The chain runs to 1241 residues: Plasma membrane calcium-transporting ATPase 4 (1241 aa).

Over 1–92 (MTNPSDRVLP…NVIPPKKPKT (92 aa)) the chain is Cytoplasmic. Position 13 is a phosphoserine (Ser13). A helical membrane pass occupies residues 93–113 (FLELVWEALQDVTLIILEIAA). Over 114 to 150 (IISLVLSFYRPAGEENELCGQVATTPEDENEAQAGWI) the chain is Extracellular. The helical transmembrane segment at 151-171 (EGAAILFSVIIVVLVTAFNDW) threads the bilayer. Over 172 to 356 (SKEKQFRGLQ…KEKSVLQGKL (185 aa)) the chain is Cytoplasmic. The segment at 294–318 (EGEKKKKGKKQGVPENRNKAKTQDG) is disordered. Position 328 is a phosphoserine (Ser328). The helical transmembrane segment at 357–376 (TRLAVQIGKAGLLMSALTVF) threads the bilayer. Topologically, residues 377-409 (ILILYFVIDNFVINRRPWLPECTPIYIQYFVKF) are extracellular. Residues 410 to 427 (FIIGITVLVVAVPEGLPL) form a helical membrane-spanning segment. Over 428–840 (AVTISLAYSV…MWGRNVYDSI (413 aa)) the chain is Cytoplasmic. The active-site 4-aspartylphosphate intermediate is Asp465. Mg(2+) is bound by residues Asp785 and Asp789. A helical transmembrane segment spans residues 841-860 (SKFLQFQLTVNVVAVIVAFT). Residues 861 to 870 (GACITQDSPL) are Extracellular-facing. Residues 871–891 (KAVQMLWVNLIMDTFASLALA) form a helical membrane-spanning segment. Topologically, residues 892 to 911 (TEPPTESLLKRRPYGRNKPL) are cytoplasmic. Residues 912-934 (ISRTMMKNILGHAFYQLIVIFIL) traverse the membrane as a helical segment. Residues 935-952 (VFAGEKFFDIDSGRKAPL) are Extracellular-facing. Residues 953–974 (HSPPSQHYTIVFNTFVLMQLFN) form a helical membrane-spanning segment. Over 975–993 (EINSRKIHGEKNVFSGIYR) the chain is Cytoplasmic. The helical transmembrane segment at 994-1015 (NIIFCSVVLGTFICQIFIVEFG) threads the bilayer. Over 1016 to 1025 (GKPFSCTSLS) the chain is Extracellular. Residues 1026–1047 (LSQWLWCLFIGIGELLWGQFIS) form a helical membrane-spanning segment. Over 1048-1241 (AIPTRSLKFL…SSLQSLETSV (194 aa)) the chain is Cytoplasmic. Positions 1086–1103 (LRRGQILWFRGLNRIQTQ) are calmodulin-binding subdomain A. Thr1102 carries the post-translational modification Phosphothreonine; by PKC. The calmodulin-binding subdomain B stretch occupies residues 1104 to 1113 (IDVINTFQTG).

The protein belongs to the cation transport ATPase (P-type) (TC 3.A.3) family. Type IIB subfamily. In terms of assembly, interacts with PDZD11. Interacts with SLC35G1 and STIM1. Interacts with calmodulin. As to expression, isoform XB is the most abundant isoform and is expressed ubiquitously. Isoforms containing segment Z have only been detected in heart, while isoforms containing segment a have been found in heart, stomach and brain cortex.

It is found in the cell membrane. It localises to the cell projection. The protein resides in the cilium. Its subcellular location is the flagellum membrane. The enzyme catalyses Ca(2+)(in) + ATP + H2O = Ca(2+)(out) + ADP + phosphate + H(+). With respect to regulation, activated by calcium/calmodulin. Functionally, calcium/calmodulin-regulated and magnesium-dependent enzyme that catalyzes the hydrolysis of ATP coupled with the transport of calcium out of the cell. By regulating sperm cell calcium homeostasis, may play a role in sperm motility. This Homo sapiens (Human) protein is Plasma membrane calcium-transporting ATPase 4.